The primary structure comprises 137 residues: Large ribosomal subunit protein uL16 (137 aa).

The protein belongs to the universal ribosomal protein uL16 family. As to quaternary structure, part of the 50S ribosomal subunit.

Binds 23S rRNA and is also seen to make contacts with the A and possibly P site tRNAs. The chain is Large ribosomal subunit protein uL16 from Acinetobacter baumannii (strain SDF).